We begin with the raw amino-acid sequence, 208 residues long: Thymidylate kinase (208 aa).

G10–T17 provides a ligand contact to ATP.

This sequence belongs to the thymidylate kinase family.

It catalyses the reaction dTMP + ATP = dTDP + ADP. Phosphorylation of dTMP to form dTDP in both de novo and salvage pathways of dTTP synthesis. The chain is Thymidylate kinase from Listeria monocytogenes serotype 4b (strain CLIP80459).